Reading from the N-terminus, the 1162-residue chain is Cartilage intermediate layer protein 2 (1162 aa).

The signal sequence occupies residues 1-20 (MASPLPLLYLCLAALHLAGA). The tract at residues 23 to 51 (ATPTEEHTSTARGLQGRPPDTGQPSPALE) is disordered. The TSP type-1 domain maps to 146 to 197 (EAAWGAWGAWGLCSKSCGLGRRLRRRSCQSSSGDTCPGSPQEAQKCVRSRCP). 4 disulfides stabilise this stretch: Cys158–Cys191, Cys162–Cys196, Cys173–Cys181, and Cys314–Cys360. In terms of domain architecture, Ig-like C2-type spans 293–377 (PYLVKHPESR…TVRSRAALLT (85 aa)). Asn330 carries N-linked (GlcNAc...) asparagine glycosylation.

May be cleaved into 2 chains possibly by a furin-like protease upon or preceding secretion. Post-translationally, N-glycosylated. As to expression, expressed in articulated and meniscal cartilage (at protein level). Also detected in heart, skeletal muscle and brain. Not detected in growth plate cartilage.

The protein resides in the secreted. It is found in the extracellular space. It localises to the extracellular matrix. Its function is as follows. May play a role in cartilage scaffolding. The sequence is that of Cartilage intermediate layer protein 2 from Mus musculus (Mouse).